Reading from the N-terminus, the 480-residue chain is MTTTVETAAATGRVARVIGPVVDVEFPVDAMPEIYNALHVEVADPAEDGARKTLTLEVAQHLGDGVVRAISMQPTDGLVRQAPVTDTGTGITVPVGDVTKGKVFNTLGQILNEPEAEAQITERWPIHRKAPAFDQLESKTEMFETGLKVVDLLTPYVKGGKIGLFGGAGVGKTVLIQEMIMRVAKLHDGVSVFAGVGERTREGNDLIDEMTESGVLEKTALVFGQMDEPPGTRLRVALSALTMAEYFRDVQKQDVLLFIDNIFRFTQAGSEVSTLLGRMPSAVGYQPTLADEMGVLQERITSTRGHSITSMQAIYVPADDLTDPAPATTFAHLDATTVLSRPISEKGIYPAVDPLDSTSRILDPRYISQDHYAAASRVKGILQKYKDLQDIIAILGIDELGEEDKLVVHRARRVERFLSQNTHAAKQFTGLDGSDVPLDESIAAFNAICDGDYDHFPEQAFFMCGGLDDLKAKAKELGVS.

166-173 (GGAGVGKT) provides a ligand contact to ATP.

It belongs to the ATPase alpha/beta chains family. In terms of assembly, F-type ATPases have 2 components, CF(1) - the catalytic core - and CF(0) - the membrane proton channel. CF(1) has five subunits: alpha(3), beta(3), gamma(1), delta(1), epsilon(1). CF(0) has three main subunits: a(1), b(2) and c(9-12). The alpha and beta chains form an alternating ring which encloses part of the gamma chain. CF(1) is attached to CF(0) by a central stalk formed by the gamma and epsilon chains, while a peripheral stalk is formed by the delta and b chains.

The protein localises to the cell membrane. The enzyme catalyses ATP + H2O + 4 H(+)(in) = ADP + phosphate + 5 H(+)(out). Its function is as follows. Produces ATP from ADP in the presence of a proton gradient across the membrane. The catalytic sites are hosted primarily by the beta subunits. In Streptomyces griseus subsp. griseus (strain JCM 4626 / CBS 651.72 / NBRC 13350 / KCC S-0626 / ISP 5235), this protein is ATP synthase subunit beta.